The following is a 110-amino-acid chain: Large ribosomal subunit protein uL23c (110 aa).

Belongs to the universal ribosomal protein uL23 family. As to quaternary structure, part of the 50S ribosomal subunit.

It localises to the plastid. The protein localises to the chloroplast. Its function is as follows. Binds to 23S rRNA. The polypeptide is Large ribosomal subunit protein uL23c (rpl23) (Porphyra purpurea (Red seaweed)).